Here is a 270-residue protein sequence, read N- to C-terminus: MVVSSAKIHPASVVEDGAVIGENVKVGPFCHIGPNVVLGDGVELLSHVVVIGRTTIGKGTKIFPGAVIGGDSQSVHHSAVDTTLVIGENCTIREGVTMNTGTVEHGGTTVVGNNNLFLAYSHVAHDCRLGNNIILSNNVMLAGHVTVEDRAILGGGSAVHQFTRVGKQAFIGGLSAVSYDVIPYGMLNGNPGVLSGLNVVGMTRAGFERPVIHAVRRCYKQIFEGPESIRANAAAVRDEYLDCPPAMEILDFIAAESDRALSSPNRGGKG.

It belongs to the transferase hexapeptide repeat family. LpxA subfamily. In terms of assembly, homotrimer.

It localises to the cytoplasm. It carries out the reaction a (3R)-hydroxyacyl-[ACP] + UDP-N-acetyl-alpha-D-glucosamine = a UDP-3-O-[(3R)-3-hydroxyacyl]-N-acetyl-alpha-D-glucosamine + holo-[ACP]. The protein operates within glycolipid biosynthesis; lipid IV(A) biosynthesis; lipid IV(A) from (3R)-3-hydroxytetradecanoyl-[acyl-carrier-protein] and UDP-N-acetyl-alpha-D-glucosamine: step 1/6. In terms of biological role, involved in the biosynthesis of lipid A, a phosphorylated glycolipid that anchors the lipopolysaccharide to the outer membrane of the cell. This is Acyl-[acyl-carrier-protein]--UDP-N-acetylglucosamine O-acyltransferase from Sinorhizobium fredii (strain NBRC 101917 / NGR234).